Consider the following 630-residue polypeptide: Terpinolene synthase, chloroplastic (630 aa).

Residues 1–52 (MALVSILPLSSKSVLHKSWIVSTYEHKAISRTIPNLGLRGRGKSVTHSLRMS) constitute a chloroplast transit peptide. Positions 381, 385, 525, and 533 each coordinate Mg(2+). The DDXXD motif motif lies at 381 to 385 (DDIYD).

This sequence belongs to the terpene synthase family. Tpsd subfamily. Requires Mg(2+) as cofactor. Mn(2+) is required as a cofactor. It depends on K(+) as a cofactor.

The protein resides in the plastid. Its subcellular location is the chloroplast. It carries out the reaction (2E)-geranyl diphosphate = terpinolene + diphosphate. It functions in the pathway terpene metabolism; oleoresin biosynthesis. In terms of biological role, involved in defensive oleoresin formation in conifers in response to insect attack or other injury. Involved in monoterpene (C10) olefins biosynthesis. This is Terpinolene synthase, chloroplastic (ag9) from Abies grandis (Grand fir).